Reading from the N-terminus, the 314-residue chain is Dihydroorotate dehydrogenase (fumarate) (314 aa).

Substrate is bound by residues lysine 46, 70 to 74, and asparagine 130; that span reads NSMGL. 46-47 provides a ligand contact to FMN; it reads KS. Asparagine 130 lines the FMN pocket. Catalysis depends on nucleophile residues serine 132 and cysteine 133. FMN is bound by residues lysine 167 and isoleucine 195. Residue 196-197 participates in substrate binding; sequence NS. Residues glycine 224, 252–253, and 274–275 each bind FMN; these read GG and GT.

This sequence belongs to the dihydroorotate dehydrogenase family. Type 1 subfamily. In terms of assembly, homodimer. The cofactor is FMN.

The protein resides in the cytoplasm. It catalyses the reaction (S)-dihydroorotate + fumarate = orotate + succinate. Its pathway is pyrimidine metabolism; UMP biosynthesis via de novo pathway. Its activity is regulated as follows. The activity is independent of the presence of oxygen. Its function is as follows. Catalyzes the conversion of dihydroorotate to orotate with fumarate as the electron acceptor. This Lachancea kluyveri (strain ATCC 58438 / CBS 3082 / BCRC 21498 / NBRC 1685 / JCM 7257 / NCYC 543 / NRRL Y-12651) (Yeast) protein is Dihydroorotate dehydrogenase (fumarate) (URA1).